The following is a 565-amino-acid chain: Sulfite reductase [NADPH] hemoprotein beta-component (565 aa).

[4Fe-4S] cluster contacts are provided by Cys429, Cys435, Cys474, and Cys478. Residue Cys478 participates in siroheme binding.

Belongs to the nitrite and sulfite reductase 4Fe-4S domain family. In terms of assembly, alpha(8)-beta(8). The alpha component is a flavoprotein, the beta component is a hemoprotein. Siroheme serves as cofactor. [4Fe-4S] cluster is required as a cofactor.

It carries out the reaction hydrogen sulfide + 3 NADP(+) + 3 H2O = sulfite + 3 NADPH + 4 H(+). The protein operates within sulfur metabolism; hydrogen sulfide biosynthesis; hydrogen sulfide from sulfite (NADPH route): step 1/1. Functionally, component of the sulfite reductase complex that catalyzes the 6-electron reduction of sulfite to sulfide. This is one of several activities required for the biosynthesis of L-cysteine from sulfate. This chain is Sulfite reductase [NADPH] hemoprotein beta-component, found in Shewanella sp. (strain MR-7).